The following is a 572-amino-acid chain: [Pyruvate dehydrogenase [acetyl-transferring]]-phosphatase 1, mitochondrial (572 aa).

Residues 95–122 are disordered; sequence NTSGNINMPSPNPKGTETQKSQRSQNDQ. The 391-residue stretch at 153 to 543 folds into the PPM-type phosphatase domain; sequence RYDVAQLPSN…DDLTVTVAFF (391 aa). Mn(2+)-binding residues include Asp197, Gly198, Asp424, and Asp480. Basic and acidic residues predominate over residues 470–480; that stretch reads EAQRPAFRYKD. Residues 470–492 are disordered; sequence EAQRPAFRYKDNNSSSPSGSNPE. Low complexity predominate over residues 481–491; the sequence is NNSSSPSGSNP.

It belongs to the PP2C family. Mg(2+) is required as a cofactor. Requires Mn(2+) as cofactor. Processed by mitochondrial inner membrane protease (IMP) complex and released to the intermembrane space.

It is found in the mitochondrion intermembrane space. It catalyses the reaction O-phospho-L-seryl-[pyruvate dehydrogenase E1 alpha subunit] + H2O = L-seryl-[pyruvate dehydrogenase E1 alpha subunit] + phosphate. Functionally, catalyzes the dephosphorylation and concomitant reactivation of the E1 alpha subunit (PDA1) of the pyruvate dehydrogenase complex. This chain is [Pyruvate dehydrogenase [acetyl-transferring]]-phosphatase 1, mitochondrial (PTC5), found in Saccharomyces cerevisiae (strain ATCC 204508 / S288c) (Baker's yeast).